The chain runs to 395 residues: Putative gustatory receptor 58a (395 aa).

Over Met1–Arg32 the chain is Cytoplasmic. A helical membrane pass occupies residues Trp33–Phe53. Over Pro54–Thr72 the chain is Extracellular. Residues Phe73–Phe93 form a helical membrane-spanning segment. Topologically, residues Arg94–Asn131 are cytoplasmic. Residues Val132 to Phe152 traverse the membrane as a helical segment. Over Arg153–His169 the chain is Extracellular. Residues Ile170–Leu190 traverse the membrane as a helical segment. Residues His191–Thr250 lie on the Cytoplasmic side of the membrane. A helical transmembrane segment spans residues Phe251–Tyr271. Topologically, residues His272 to Arg288 are extracellular. N-linked (GlcNAc...) asparagine glycosylation is present at Asn278. Residues Ile289–Val309 form a helical membrane-spanning segment. Topologically, residues Asp310–Gln366 are cytoplasmic. Residues Thr367–Leu387 form a helical membrane-spanning segment. The Extracellular portion of the chain corresponds to Lys388–Asn395.

The protein belongs to the insect chemoreceptor superfamily. Gustatory receptor (GR) family. Gr22e subfamily. In terms of tissue distribution, expressed in the adult labellar chemosensory neurons.

The protein resides in the cell membrane. In terms of biological role, probable gustatory receptor which mediates acceptance or avoidance behavior, depending on its substrates. This chain is Putative gustatory receptor 58a (Gr58a), found in Drosophila melanogaster (Fruit fly).